A 374-amino-acid chain; its full sequence is Chaperone protein DnaJ (374 aa).

The J domain maps to 5–70; that stretch reads DYYEVLGVSK…QKRAAYDQYG (66 aa). A CR-type zinc finger spans residues 132 to 210; that stretch reads GTTVKIRVPT…CHGHGRVEET (79 aa). Positions 145, 148, 162, 165, 184, 187, 198, and 201 each coordinate Zn(2+). CXXCXGXG motif repeat units lie at residues 145–152, 162–169, 184–191, and 198–205; these read CKPCGGSG, CTTCGGHG, CPNCRGQG, and CKECHGHG.

This sequence belongs to the DnaJ family. Homodimer. Requires Zn(2+) as cofactor.

It localises to the cytoplasm. Participates actively in the response to hyperosmotic and heat shock by preventing the aggregation of stress-denatured proteins and by disaggregating proteins, also in an autonomous, DnaK-independent fashion. Unfolded proteins bind initially to DnaJ; upon interaction with the DnaJ-bound protein, DnaK hydrolyzes its bound ATP, resulting in the formation of a stable complex. GrpE releases ADP from DnaK; ATP binding to DnaK triggers the release of the substrate protein, thus completing the reaction cycle. Several rounds of ATP-dependent interactions between DnaJ, DnaK and GrpE are required for fully efficient folding. Also involved, together with DnaK and GrpE, in the DNA replication of plasmids through activation of initiation proteins. The protein is Chaperone protein DnaJ of Saccharophagus degradans (strain 2-40 / ATCC 43961 / DSM 17024).